A 226-amino-acid polypeptide reads, in one-letter code: Cytidylate kinase (226 aa).

11–19 (GPASAGKST) lines the ATP pocket.

It belongs to the cytidylate kinase family. Type 1 subfamily.

The protein resides in the cytoplasm. The catalysed reaction is CMP + ATP = CDP + ADP. The enzyme catalyses dCMP + ATP = dCDP + ADP. The chain is Cytidylate kinase from Pediococcus pentosaceus (strain ATCC 25745 / CCUG 21536 / LMG 10740 / 183-1w).